The sequence spans 312 residues: Small ribosomal subunit biogenesis GTPase RsgA (312 aa).

In terms of domain architecture, CP-type G spans glutamine 86–proline 245. GTP-binding positions include threonine 135–aspartate 138 and glycine 187–serine 195. Residues cysteine 270, cysteine 275, histidine 277, and cysteine 283 each coordinate Zn(2+).

This sequence belongs to the TRAFAC class YlqF/YawG GTPase family. RsgA subfamily. In terms of assembly, monomer. Associates with 30S ribosomal subunit, binds 16S rRNA. The cofactor is Zn(2+).

It is found in the cytoplasm. Its function is as follows. One of several proteins that assist in the late maturation steps of the functional core of the 30S ribosomal subunit. Helps release RbfA from mature subunits. May play a role in the assembly of ribosomal proteins into the subunit. Circularly permuted GTPase that catalyzes slow GTP hydrolysis, GTPase activity is stimulated by the 30S ribosomal subunit. In Prochlorococcus marinus (strain NATL2A), this protein is Small ribosomal subunit biogenesis GTPase RsgA.